The following is a 255-amino-acid chain: dTDP-3-amino-3,6-dideoxy-alpha-D-glucopyranose N,N-dimethyltransferase (255 aa).

S-adenosyl-L-methionine-binding positions include Tyr14, Tyr22, Tyr33, Ala58, 58–59, Glu79, 101–102, and Met117; these read AC and DM.

The protein belongs to the methyltransferase TylM1/DesVI family. As to quaternary structure, homodimer.

The catalysed reaction is dTDP-3-amino-3,6-dideoxy-alpha-D-glucose + 2 S-adenosyl-L-methionine = dTDP-alpha-D-mycaminose + 2 S-adenosyl-L-homocysteine + 2 H(+). Its pathway is antibiotic biosynthesis; tylosin biosynthesis. S-adenosyl-L-methionine-dependent methyltransferase involved in the biosynthesis of mycaminose, an essential structural component of the macrolide antibiotic tylosin. Involved in the last step in mycaminose biosynthesis by mediating dimethylation of the hexose C-3' amino group. The sequence is that of dTDP-3-amino-3,6-dideoxy-alpha-D-glucopyranose N,N-dimethyltransferase (tylM1) from Streptomyces fradiae (Streptomyces roseoflavus).